Here is a 399-residue protein sequence, read N- to C-terminus: Chorismate synthase (399 aa).

2 residues coordinate NADP(+): Arg-40 and Arg-46. FMN is bound by residues 135 to 137 (RAS), 256 to 257 (QA), Gly-301, 316 to 320 (KPIAT), and Arg-342.

The protein belongs to the chorismate synthase family. In terms of assembly, homotetramer. Requires FMNH2 as cofactor.

It catalyses the reaction 5-O-(1-carboxyvinyl)-3-phosphoshikimate = chorismate + phosphate. The protein operates within metabolic intermediate biosynthesis; chorismate biosynthesis; chorismate from D-erythrose 4-phosphate and phosphoenolpyruvate: step 7/7. Its function is as follows. Catalyzes the anti-1,4-elimination of the C-3 phosphate and the C-6 proR hydrogen from 5-enolpyruvylshikimate-3-phosphate (EPSP) to yield chorismate, which is the branch point compound that serves as the starting substrate for the three terminal pathways of aromatic amino acid biosynthesis. This reaction introduces a second double bond into the aromatic ring system. The protein is Chorismate synthase of Pseudarthrobacter chlorophenolicus (strain ATCC 700700 / DSM 12829 / CIP 107037 / JCM 12360 / KCTC 9906 / NCIMB 13794 / A6) (Arthrobacter chlorophenolicus).